Consider the following 224-residue polypeptide: Small ribosomal subunit protein uS3 (224 aa).

A KH type-2 domain is found at 38–106 (IRKFISEKLK…QVHINIVEIK (69 aa)).

The protein belongs to the universal ribosomal protein uS3 family. As to quaternary structure, part of the 30S ribosomal subunit. Forms a tight complex with proteins S10 and S14.

Functionally, binds the lower part of the 30S subunit head. Binds mRNA in the 70S ribosome, positioning it for translation. The protein is Small ribosomal subunit protein uS3 of Lactobacillus acidophilus (strain ATCC 700396 / NCK56 / N2 / NCFM).